The chain runs to 1117 residues: Reverse gyrase (1117 aa).

The RG N-terminal-type zinc finger occupies 3-42 (LATGAKYYHSCINCGGINTDTRNEKGLPCEVCLPFEDGDV). Zn(2+)-binding residues include Cys-13, Cys-16, Cys-31, and Cys-34. ATP is bound by residues Gln-84 and 101 to 108 (APTGVGKT). The region spanning 88 to 284 (AKRLLLSKSF…LFRELLGFEI (197 aa)) is the Helicase ATP-binding domain. Positions 206–209 (DDVD) match the DEAD box motif. The tract at residues 551-1117 (KDMKSRMIIV…EELNEILIKN (567 aa)) is topoisomerase I. One can recognise a Toprim domain in the interval 555-712 (SRMIIVESPT…NVQRIEMHEI (158 aa)). Position 561 (Glu-561) interacts with Mg(2+). Residues 631-658 (IKRCSSCGAQFTDELPRCPYCNSDKIDD) form an RG C-terminal-type zinc finger. 4 residues coordinate Zn(2+): Cys-634, Cys-637, Cys-648, and Cys-651. Position 681 (Asp-681) interacts with Mg(2+). One can recognise a Topo IA-type catalytic domain in the interval 728-1114 (DVNLVKSQIV…NLYEELNEIL (387 aa)). The active-site O-(5'-phospho-DNA)-tyrosine intermediate is Tyr-864.

This sequence in the N-terminal section; belongs to the DEAD box helicase family. DDVD subfamily. It in the C-terminal section; belongs to the type IA topoisomerase family. In terms of assembly, monomer. It depends on Zn(2+) as a cofactor. Mg(2+) is required as a cofactor.

It is found in the cytoplasm. The enzyme catalyses ATP + H2O = ADP + phosphate + H(+). Its function is as follows. Modifies the topological state of DNA by introducing positive supercoils in an ATP-dependent process, increasing the linking number in steps of +1; also positively supercoils with dATP and ATP-gamma-S. With UTP or dTTP relaxes negatively supercoiled DNA, in the absence of any nucleotide partially relaxes negative supercoils. In the absence of nucleotide has a higher affinity for dsDNA with a single-stranded tail than dsDNA or ssDNA. Has an ATPase activity in the absence of DNA. Binds to single-stranded DNA, transiently cleaves and then rejoins the ends, introducing a positive supercoil in the process. The scissile phosphodiester is attacked by the catalytic tyrosine of the enzyme, resulting in the formation of a DNA-(5'-phosphotyrosyl)-enzyme intermediate. Probably involved in rewinding DNA strands in regions of the chromosome that have opened up to allow replication, transcription, DNA repair and/or for DNA protection. The sequence is that of Reverse gyrase from Caldanaerobacter subterraneus subsp. tengcongensis (strain DSM 15242 / JCM 11007 / NBRC 100824 / MB4) (Thermoanaerobacter tengcongensis).